The following is a 504-amino-acid chain: Maturase K (504 aa).

Belongs to the intron maturase 2 family. MatK subfamily.

Its subcellular location is the plastid. The protein localises to the chloroplast. In terms of biological role, usually encoded in the trnK tRNA gene intron. Probably assists in splicing its own and other chloroplast group II introns. This is Maturase K from Cucumis sativus (Cucumber).